The chain runs to 152 residues: D-erythrulose-4-phosphate isomerase 2 (152 aa).

The Proton acceptor role is filled by cysteine 70.

The protein belongs to the LacAB/RpiB family.

It carries out the reaction D-erythrulose 4-phosphate = D-erythrose 4-phosphate. Its pathway is carbohydrate metabolism; erythritol degradation. It participates in carbohydrate metabolism; D-threitol degradation. The protein operates within carbohydrate metabolism; L-threitol degradation. Functionally, catalyzes the isomerization of D-erythrulose-4P to D-erythrose-4P. Involved in the degradation pathways of L-threitol, D-threitol and erythritol, that allow M.smegmatis to grow on these compounds as the sole carbon source. The sequence is that of D-erythrulose-4-phosphate isomerase 2 from Mycolicibacterium smegmatis (strain ATCC 700084 / mc(2)155) (Mycobacterium smegmatis).